Here is a 155-residue protein sequence, read N- to C-terminus: Ribosomal RNA large subunit methyltransferase H (155 aa).

S-adenosyl-L-methionine contacts are provided by residues leucine 73, glycine 104, and 123 to 128 (LSRMTF).

It belongs to the RNA methyltransferase RlmH family. In terms of assembly, homodimer.

The protein localises to the cytoplasm. The enzyme catalyses pseudouridine(1915) in 23S rRNA + S-adenosyl-L-methionine = N(3)-methylpseudouridine(1915) in 23S rRNA + S-adenosyl-L-homocysteine + H(+). Functionally, specifically methylates the pseudouridine at position 1915 (m3Psi1915) in 23S rRNA. The polypeptide is Ribosomal RNA large subunit methyltransferase H (Methylococcus capsulatus (strain ATCC 33009 / NCIMB 11132 / Bath)).